The chain runs to 384 residues: DNA replication and repair protein RecF (384 aa).

Position 43 to 50 (glycine 43 to threonine 50) interacts with ATP.

Belongs to the RecF family.

The protein localises to the cytoplasm. Functionally, the RecF protein is involved in DNA metabolism; it is required for DNA replication and normal SOS inducibility. RecF binds preferentially to single-stranded, linear DNA. It also seems to bind ATP. The chain is DNA replication and repair protein RecF from Brucella abortus (strain 2308).